The chain runs to 194 residues: 13S globulin basic chain (194 aa).

One can recognise a Cupin type-1 domain in the interval 13 to 162 (ENIKSPQEAD…SFQISSEEAE (150 aa)).

The protein belongs to the 11S seed storage protein (globulins) family. As to quaternary structure, hexamer; each subunit is composed of an acidic and a basic chain derived from a single precursor and linked by a disulfide bond. In terms of tissue distribution, cotyledons and endosperm protein bodies.

Functionally, seed storage protein with a relatively high level of Lys and Met. This is 13S globulin basic chain from Fagopyrum esculentum (Common buckwheat).